A 401-amino-acid chain; its full sequence is Tyrosine--tRNA ligase (401 aa).

Residues 41-50 (PSRPDLHLGH) carry the 'HIGH' region motif. Positions 225–229 (KMSKS) match the 'KMSKS' region motif. Position 228 (lysine 228) interacts with ATP. Positions 334 to 395 (KNIVDLLVEI…GKRKFYRISG (62 aa)) constitute an S4 RNA-binding domain.

This sequence belongs to the class-I aminoacyl-tRNA synthetase family. TyrS type 2 subfamily. As to quaternary structure, homodimer.

It localises to the cytoplasm. The enzyme catalyses tRNA(Tyr) + L-tyrosine + ATP = L-tyrosyl-tRNA(Tyr) + AMP + diphosphate + H(+). In terms of biological role, catalyzes the attachment of tyrosine to tRNA(Tyr) in a two-step reaction: tyrosine is first activated by ATP to form Tyr-AMP and then transferred to the acceptor end of tRNA(Tyr). In Thermotoga maritima (strain ATCC 43589 / DSM 3109 / JCM 10099 / NBRC 100826 / MSB8), this protein is Tyrosine--tRNA ligase.